Reading from the N-terminus, the 555-residue chain is Formate--tetrahydrofolate ligase (555 aa).

ATP is bound at residue 65–72 (TPAGEGKS).

It belongs to the formate--tetrahydrofolate ligase family.

The catalysed reaction is (6S)-5,6,7,8-tetrahydrofolate + formate + ATP = (6R)-10-formyltetrahydrofolate + ADP + phosphate. It participates in one-carbon metabolism; tetrahydrofolate interconversion. This Staphylococcus haemolyticus (strain JCSC1435) protein is Formate--tetrahydrofolate ligase.